Here is an 847-residue protein sequence, read N- to C-terminus: Endo-beta-N-acetylglucosaminidase EndoSd (847 aa).

An N-terminal signal peptide occupies residues Met1 to Ala36. Residues Pro65 to Thr377 form the GH18 domain. His107 contributes to the a glycoprotein binding site. The Proton donor role is filled by Glu186. Glu188, Gln250, Tyr252, Glu288, Glu289, Asn295, and Tyr339 together coordinate a glycoprotein. 4 LRR repeats span residues Leu423 to Leu446, Ser447 to Glu470, Met483 to Gly506, and Leu507 to Lys530. The segment at Met683–Arg836 is carbohydrate-binding module (CBM). Residues Lys704, Asp707, and Glu829 each coordinate Ca(2+).

Belongs to the glycosyl hydrolase 18 family.

It localises to the secreted. It is found in the host extracellular space. It carries out the reaction an N(4)-(oligosaccharide-(1-&gt;3)-[oligosaccharide-(1-&gt;6)]-beta-D-Man-(1-&gt;4)-beta-D-GlcNAc-(1-&gt;4)-alpha-D-GlcNAc)-L-asparaginyl-[protein] + H2O = an oligosaccharide-(1-&gt;3)-[oligosaccharide-(1-&gt;6)]-beta-D-Man-(1-&gt;4)-D-GlcNAc + N(4)-(N-acetyl-beta-D-glucosaminyl)-L-asparaginyl-[protein]. In terms of biological role, endoglucosidase that acts as a host immune evasion factor by mediating hydrolysis of the N-linked glycan from the Fc region of host immunoglobulin-gamma (IgG) during infection. Specifically catalyzes the hydrolysis of the beta-1,4 linkage between the first two N-acetylglucosamine residues of the complex-type N-linked glycan located on 'Asn-297' of the Fc region of IgG antibodies (IGHG1, IGHG2, IGHG3 or IGHG4), thereby preventing interaction between IgGs and Fc receptors and ability to activate the complement pathway. Shows a specificity for biantennary complex type N-glycans; does neither cleave larger complex type glycans nor oligomannose and nor hybrid-type glycans. Specifically acts on IgGs; does not act on immunoglobulin alpha, beta, delta or mu. In Streptococcus dysgalactiae, this protein is Endo-beta-N-acetylglucosaminidase EndoSd.